A 231-amino-acid polypeptide reads, in one-letter code: Large ribosomal subunit protein uL1 (231 aa).

This sequence belongs to the universal ribosomal protein uL1 family. As to quaternary structure, part of the 50S ribosomal subunit.

In terms of biological role, binds directly to 23S rRNA. The L1 stalk is quite mobile in the ribosome, and is involved in E site tRNA release. Its function is as follows. Protein L1 is also a translational repressor protein, it controls the translation of the L11 operon by binding to its mRNA. This chain is Large ribosomal subunit protein uL1, found in Pseudomonas syringae pv. tomato (strain ATCC BAA-871 / DC3000).